The primary structure comprises 197 residues: MIIGITGGIASGKSTVVKVIRKAGYQVIDADQVVHDLQEKGGRLYEALREAFGNQILKADGELDRTKLSEMLFSNPDNMATSSAIQNQIIKEELAAKRDHLAQSQAIFFMDIPILMELGYQDWFDAIWLVYVDAQTQLQRLMARNRLDKGKARQRIASQLPIEEKKPYASLVIDNSGDIAALIKQVQSALLSLANPR.

Residues 2–197 (IIGITGGIAS…SALLSLANPR (196 aa)) form the DPCK domain. ATP is bound at residue 10 to 15 (ASGKST).

Belongs to the CoaE family.

The protein resides in the cytoplasm. It carries out the reaction 3'-dephospho-CoA + ATP = ADP + CoA + H(+). It functions in the pathway cofactor biosynthesis; coenzyme A biosynthesis; CoA from (R)-pantothenate: step 5/5. Functionally, catalyzes the phosphorylation of the 3'-hydroxyl group of dephosphocoenzyme A to form coenzyme A. The polypeptide is Dephospho-CoA kinase (Streptococcus pyogenes serotype M28 (strain MGAS6180)).